The primary structure comprises 46 residues: Thymosin beta-a (46 aa).

Residues 21–30 are compositionally biased toward polar residues; that stretch reads TNTAEKNTLP. The disordered stretch occupies residues 21 to 46; it reads TNTAEKNTLPTKEDIDQEKKAAEGGK. Residues 31-46 are compositionally biased toward basic and acidic residues; sequence TKEDIDQEKKAAEGGK.

This sequence belongs to the thymosin beta family.

Its subcellular location is the cytoplasm. The protein localises to the cytoskeleton. In terms of biological role, plays an important role in the organization of the cytoskeleton. Binds to and sequesters actin monomers (G actin) and therefore inhibits actin polymerization. This is Thymosin beta-a from Cyprinus carpio (Common carp).